We begin with the raw amino-acid sequence, 872 residues long: Alanine--tRNA ligase (872 aa).

Zn(2+) is bound by residues His567, His571, Cys669, and His673.

It belongs to the class-II aminoacyl-tRNA synthetase family. It depends on Zn(2+) as a cofactor.

Its subcellular location is the cytoplasm. It carries out the reaction tRNA(Ala) + L-alanine + ATP = L-alanyl-tRNA(Ala) + AMP + diphosphate. In terms of biological role, catalyzes the attachment of alanine to tRNA(Ala) in a two-step reaction: alanine is first activated by ATP to form Ala-AMP and then transferred to the acceptor end of tRNA(Ala). Also edits incorrectly charged Ser-tRNA(Ala) and Gly-tRNA(Ala) via its editing domain. The sequence is that of Alanine--tRNA ligase from Streptococcus gordonii (strain Challis / ATCC 35105 / BCRC 15272 / CH1 / DL1 / V288).